We begin with the raw amino-acid sequence, 1008 residues long: MRVHRFCVIVIFLTELLCFFYSSESQTTSRCHPHDLEALRDFIAHLEPKPDGWINSSSSTDCCNWTGITCNSNNTGRVIRLELGNKKLSGKLSESLGKLDEIRVLNLSRNFIKDSIPLSIFNLKNLQTLDLSSNDLSGGIPTSINLPALQSFDLSSNKFNGSLPSHICHNSTQIRVVKLAVNYFAGNFTSGFGKCVLLEHLCLGMNDLTGNIPEDLFHLKRLNLLGIQENRLSGSLSREIRNLSSLVRLDVSWNLFSGEIPDVFDELPQLKFFLGQTNGFIGGIPKSLANSPSLNLLNLRNNSLSGRLMLNCTAMIALNSLDLGTNRFNGRLPENLPDCKRLKNVNLARNTFHGQVPESFKNFESLSYFSLSNSSLANISSALGILQHCKNLTTLVLTLNFHGEALPDDSSLHFEKLKVLVVANCRLTGSMPRWLSSSNELQLLDLSWNRLTGAIPSWIGDFKALFYLDLSNNSFTGEIPKSLTKLESLTSRNISVNEPSPDFPFFMKRNESARALQYNQIFGFPPTIELGHNNLSGPIWEEFGNLKKLHVFDLKWNALSGSIPSSLSGMTSLEALDLSNNRLSGSIPVSLQQLSFLSKFSVAYNNLSGVIPSGGQFQTFPNSSFESNHLCGEHRFPCSEGTESALIKRSRRSRGGDIGMAIGIAFGSVFLLTLLSLIVLRARRRSGEVDPEIEESESMNRKELGEIGSKLVVLFQSNDKELSYDDLLDSTNSFDQANIIGCGGFGMVYKATLPDGKKVAIKKLSGDCGQIEREFEAEVETLSRAQHPNLVLLRGFCFYKNDRLLIYSYMENGSLDYWLHERNDGPALLKWKTRLRIAQGAAKGLLYLHEGCDPHILHRDIKSSNILLDENFNSHLADFGLARLMSPYETHVSTDLVGTLGYIPPEYGQASVATYKGDVYSFGVVLLELLTDKRPVDMCKPKGCRDLISWVVKMKHESRASEVFDPLIYSKENDKEMFRVLEIACLCLSENPKQRPTTQQLVSWLDDV.

The N-terminal stretch at 1–25 is a signal peptide; that stretch reads MRVHRFCVIVIFLTELLCFFYSSES. Residues Asn-55, Asn-64, and Asn-73 are each glycosylated (N-linked (GlcNAc...) asparagine). LRR repeat units lie at residues 75 to 98, 99 to 123, 124 to 148, 150 to 170, 172 to 194, 195 to 219, 221 to 243, 244 to 266, 291 to 315, 316 to 339, 341 to 362, and 363 to 387; these read TGRV…SLGK, LDEI…IFNL, KNLQ…NLPA, QSFD…ICHN, TQIR…GFGK, CVLL…LFHL, RLNL…IRNL, SSLV…VFDE, SPSL…CTAM, IALN…LPDC, RLKN…SFKN, and FESL…GILQ. Residue Asn-106 is glycosylated (N-linked (GlcNAc...) asparagine). N-linked (GlcNAc...) asparagine glycosylation is found at Asn-160, Asn-170, and Asn-187. Asn-242 carries an N-linked (GlcNAc...) asparagine glycan. Arg-300 provides a ligand contact to phytosulfokine. N-linked (GlcNAc...) asparagine glycans are attached at residues Asn-301 and Asn-311. Phytosulfokine contacts are provided by Asn-346, Ser-370, and Ser-372. Residues Asn-373, Asn-378, and Asn-391 are each glycosylated (N-linked (GlcNAc...) asparagine). 4 LRR repeats span residues 392-414, 415-438, 439-464, and 466-486; these read LTTL…SLHF, EKLK…LSSS, NELQ…DFKA, and FYLD…LTKL. 3 residues coordinate phytosulfokine: Thr-398, Asn-424, and Asp-445. N-linked (GlcNAc...) asparagine glycosylation is found at Asn-472 and Asn-493. Residue Lys-508 participates in phytosulfokine binding. 2 N-linked (GlcNAc...) asparagine glycosylation sites follow: Asn-510 and Asn-534. LRR repeat units lie at residues 521 to 545, 546 to 570, 571 to 594, and 596 to 619; these read IFGF…EFGN, LKKL…LSGM, TSLE…LQQL, and FLSK…QFQT. N-linked (GlcNAc...) asparagine glycans are attached at residues Asn-606 and Asn-622. Residues 660–680 traverse the membrane as a helical segment; the sequence is MAIGIAFGSVFLLTLLSLIVL. Thr-731 carries the post-translational modification Phosphothreonine. The 272-residue stretch at 734–1005 folds into the Protein kinase domain; it reads FDQANIIGCG…PTTQQLVSWL (272 aa). ATP is bound by residues 740-748 and Lys-762; that span reads IGCGGFGMV. A phosphotyrosine mark is found at Tyr-807 and Tyr-847. The active-site Proton acceptor is Asp-860. Tyr-902 is modified (phosphotyrosine).

This sequence belongs to the protein kinase superfamily. Ser/Thr protein kinase family. Homo- and heterodimers with PSY1R. Heterodimers with the somatic embryogenesis receptor-like kinases (SERKs). PSK is not directly involved in PSKR-SERK interaction but stabilizes PSKR island domain for recruitment of a SERK. Part of a functional complex containing PSKR1, BAK1, CNGC17, and AHA. Interacts with AHA1, AHA2, and BAK1, but not with CNGC17 or BRI1. The cofactor is Mg(2+). Mn(2+) serves as cofactor. In terms of tissue distribution, weakly expressed in roots, leaves, stems and flowers. Expressed in the primary and lateral roots, including root primordia and root tips, but not in the hypocotyl.

The protein localises to the cell membrane. The catalysed reaction is L-seryl-[protein] + ATP = O-phospho-L-seryl-[protein] + ADP + H(+). The enzyme catalyses L-threonyl-[protein] + ATP = O-phospho-L-threonyl-[protein] + ADP + H(+). It catalyses the reaction GTP = 3',5'-cyclic GMP + diphosphate. Its activity is regulated as follows. cGMP suppresses kinase activity. Its function is as follows. Phytosulfokine receptor with both a serine/threonine-protein kinase activity and a guanylate cyclase activity. Regulates, in response to phytosulfokine binding, a signaling cascade involved in plant cell differentiation, organogenesis, somatic embryogenesis, cellular proliferation and plant growth. Involved in plant immunity, with antagonistic effects on bacterial and fungal resistances. Not involved in PSY perception. CNGC17 and AHAs form a functional cation-translocating unit that is activated by PSKR1/BAK1 and possibly other BAK1/RLK complexes. This Arabidopsis thaliana (Mouse-ear cress) protein is Phytosulfokine receptor 1.